We begin with the raw amino-acid sequence, 496 residues long: Cytochrome P450 71D179 (496 aa).

A helical; Signal-anchor for type II membrane protein membrane pass occupies residues 1–21; that stretch reads MDISISWVVIIVSVLSYLILM. Cys435 is a binding site for heme.

It belongs to the cytochrome P450 family. It depends on heme as a cofactor.

The protein resides in the membrane. Its pathway is secondary metabolite biosynthesis; terpenoid biosynthesis. Involved in the biosynthesis of phenolic monoterpenes natural products thymol and carvacrol which have a broad range of biological activities acting as antimicrobial compounds, insecticides, antioxidants and pharmaceutical agents. Catalyzes probably the C3-hydroxylation of gamma-terpinene to produce thymol. The chain is Cytochrome P450 71D179 from Thymus vulgaris (Thyme).